Reading from the N-terminus, the 102-residue chain is MPIAVGMIETRGFPAVVEAADAMVKAARVTLVGYEKIGSGRVTVIVRGDVSEVQASVAAGVDSAKRVNGGEVLSTHIIARPHENLEYVLPIRYTEAVEQFRN.

The BMC domain occupies 4–90 (AVGMIETRGF…PHENLEYVLP (87 aa)).

Belongs to the bacterial microcompartments protein family. CcmK subfamily. As to quaternary structure, homohexamer. Stacked hexamers, with the concave faces together, have also been crystallized. Interacts preferentially with itself, then with CcmK1 and CcmK4a in vitro. May interact with CcmL, this occurs at very high CcmK2 concentrations. Interacts with CcmN and CcmO in the carboxysome.

The protein resides in the carboxysome. Its function is as follows. Probably the major shell protein of the carboxysome, a polyhedral inclusion where RuBisCO (ribulose bisphosphate carboxylase, rbcL-rbcS) is sequestered. Assembles into hexamers which make sheets that form the facets of the polyhedral carboxysome. The hexamer central pore probably regulates metabolite flux. The protein is Carboxysome shell protein CcmK2 of Thermosynechococcus vestitus (strain NIES-2133 / IAM M-273 / BP-1).